Consider the following 72-residue polypeptide: MGKQPVKLKAVVYALSPFQQKIMTGLWKDLPEKIHHKVSENWISTILLVAPVVGTYSYAQYFKEQEKLEHRF.

Over methionine 1–asparagine 41 the chain is Mitochondrial matrix. The chain crosses the membrane as a helical span at residues tryptophan 42–tyrosine 58. Residues alanine 59–phenylalanine 72 lie on the Mitochondrial intermembrane side of the membrane.

It belongs to the UQCRQ/QCR8 family. In terms of assembly, component of the ubiquinol-cytochrome c oxidoreductase (cytochrome b-c1 complex, complex III, CIII), a multisubunit enzyme composed of 10 subunits. The complex is composed of 3 respiratory subunits cytochrome b (MT-CYB), cytochrome c1 (CYC1-1 or CYC1-2) and Rieske protein (UCR1-1 or UCR1-2), 2 core protein subunits MPPalpha1 (or MPPalpha2) and MPPB, and 5 low-molecular weight protein subunits QCR7-1 (or QCR7-2), UCRQ-1 (or UCRQ-2), QCR9, UCRY and probably QCR6-1 (or QCR6-2). The complex exists as an obligatory dimer and forms supercomplexes (SCs) in the inner mitochondrial membrane with NADH-ubiquinone oxidoreductase (complex I, CI), resulting in different assemblies (supercomplexes SCI(1)III(2) and SCI(2)III(4)).

It localises to the mitochondrion inner membrane. Functionally, component of the ubiquinol-cytochrome c oxidoreductase, a multisubunit transmembrane complex that is part of the mitochondrial electron transport chain which drives oxidative phosphorylation. The respiratory chain contains 3 multisubunit complexes succinate dehydrogenase (complex II, CII), ubiquinol-cytochrome c oxidoreductase (cytochrome b-c1 complex, complex III, CIII) and cytochrome c oxidase (complex IV, CIV), that cooperate to transfer electrons derived from NADH and succinate to molecular oxygen, creating an electrochemical gradient over the inner membrane that drives transmembrane transport and the ATP synthase. The cytochrome b-c1 complex catalyzes electron transfer from ubiquinol to cytochrome c, linking this redox reaction to translocation of protons across the mitochondrial inner membrane, with protons being carried across the membrane as hydrogens on the quinol. In the process called Q cycle, 2 protons are consumed from the matrix, 4 protons are released into the intermembrane space and 2 electrons are passed to cytochrome c. This chain is Cytochrome b-c1 complex subunit 8-2, mitochondrial (UCRQ-2), found in Arabidopsis thaliana (Mouse-ear cress).